Reading from the N-terminus, the 387-residue chain is UDP-N-acetylglucosamine--N-acetylmuramyl-(pentapeptide) pyrophosphoryl-undecaprenol N-acetylglucosamine transferase (387 aa).

UDP-N-acetyl-alpha-D-glucosamine-binding positions include 23–25, asparagine 135, arginine 174, serine 203, isoleucine 261, 280–285, and glutamine 306; these read TGG and ALTVSE.

The protein belongs to the glycosyltransferase 28 family. MurG subfamily.

The protein localises to the cell inner membrane. The enzyme catalyses di-trans,octa-cis-undecaprenyl diphospho-N-acetyl-alpha-D-muramoyl-L-alanyl-D-glutamyl-meso-2,6-diaminopimeloyl-D-alanyl-D-alanine + UDP-N-acetyl-alpha-D-glucosamine = di-trans,octa-cis-undecaprenyl diphospho-[N-acetyl-alpha-D-glucosaminyl-(1-&gt;4)]-N-acetyl-alpha-D-muramoyl-L-alanyl-D-glutamyl-meso-2,6-diaminopimeloyl-D-alanyl-D-alanine + UDP + H(+). It participates in cell wall biogenesis; peptidoglycan biosynthesis. Its function is as follows. Cell wall formation. Catalyzes the transfer of a GlcNAc subunit on undecaprenyl-pyrophosphoryl-MurNAc-pentapeptide (lipid intermediate I) to form undecaprenyl-pyrophosphoryl-MurNAc-(pentapeptide)GlcNAc (lipid intermediate II). The sequence is that of UDP-N-acetylglucosamine--N-acetylmuramyl-(pentapeptide) pyrophosphoryl-undecaprenol N-acetylglucosamine transferase from Colwellia psychrerythraea (strain 34H / ATCC BAA-681) (Vibrio psychroerythus).